The following is a 66-amino-acid chain: Putative inactive (E)-beta-ocimene synthase, chloroplastic (66 aa).

Residues 1–25 (MAAHNLCFNSAFVCNVHHQKTQHFP) constitute a chloroplast transit peptide.

This sequence belongs to the terpene synthase family. Tpsb subfamily. As to expression, expressed exclusively in flowers.

Its subcellular location is the plastid. It is found in the chloroplast. This is Putative inactive (E)-beta-ocimene synthase, chloroplastic (TPS02) from Arabidopsis thaliana (Mouse-ear cress).